A 252-amino-acid polypeptide reads, in one-letter code: Chitooligosaccharide deacetylase (252 aa).

Residues His-61 and His-125 each contribute to the Mg(2+) site.

This sequence belongs to the YdjC deacetylase family. ChbG subfamily. Homodimer. Mg(2+) serves as cofactor.

The protein resides in the cytoplasm. The enzyme catalyses N,N'-diacetylchitobiose + H2O = N-acetyl-beta-D-glucosaminyl-(1-&gt;4)-D-glucosamine + acetate. The catalysed reaction is diacetylchitobiose-6'-phosphate + H2O = N'-monoacetylchitobiose-6'-phosphate + acetate. The protein operates within glycan degradation; chitin degradation. Its function is as follows. Involved in the degradation of chitin. ChbG is essential for growth on the acetylated chitooligosaccharides chitobiose and chitotriose but is dispensable for growth on cellobiose and chitosan dimer, the deacetylated form of chitobiose. Deacetylation of chitobiose-6-P and chitotriose-6-P is necessary for both the activation of the chb promoter by the regulatory protein ChbR and the hydrolysis of phosphorylated beta-glucosides by the phospho-beta-glucosidase ChbF. Catalyzes the removal of only one acetyl group from chitobiose-6-P to yield monoacetylchitobiose-6-P, the inducer of ChbR and the substrate of ChbF. In Salmonella schwarzengrund (strain CVM19633), this protein is Chitooligosaccharide deacetylase.